The sequence spans 272 residues: uncharacterized protein (272 aa).

The N-terminal stretch at 1–20 (MKLRKIFLLPLISLSTLSVA) is a signal peptide. Cys21 carries the N-palmitoyl cysteine lipid modification. Residue Cys21 is the site of S-diacylglycerol cysteine attachment.

It belongs to the MG439/MG440 family.

The protein localises to the cell membrane. This is an uncharacterized protein from Mycoplasma genitalium (strain ATCC 33530 / DSM 19775 / NCTC 10195 / G37) (Mycoplasmoides genitalium).